The following is a 59-amino-acid chain: Small, acid-soluble spore protein H 2 (59 aa).

The protein belongs to the SspH family.

Its subcellular location is the spore core. The chain is Small, acid-soluble spore protein H 2 (sspH2) from Bacillus anthracis.